Reading from the N-terminus, the 317-residue chain is Acetyl-coenzyme A carboxylase carboxyl transferase subunit alpha (317 aa).

One can recognise a CoA carboxyltransferase C-terminal domain in the interval 40–293 (LEKRSADALK…GDIITASLRS (254 aa)).

It belongs to the AccA family. Acetyl-CoA carboxylase is a heterohexamer composed of biotin carboxyl carrier protein (AccB), biotin carboxylase (AccC) and two subunits each of ACCase subunit alpha (AccA) and ACCase subunit beta (AccD).

The protein localises to the cytoplasm. It catalyses the reaction N(6)-carboxybiotinyl-L-lysyl-[protein] + acetyl-CoA = N(6)-biotinyl-L-lysyl-[protein] + malonyl-CoA. It functions in the pathway lipid metabolism; malonyl-CoA biosynthesis; malonyl-CoA from acetyl-CoA: step 1/1. In terms of biological role, component of the acetyl coenzyme A carboxylase (ACC) complex. First, biotin carboxylase catalyzes the carboxylation of biotin on its carrier protein (BCCP) and then the CO(2) group is transferred by the carboxyltransferase to acetyl-CoA to form malonyl-CoA. The chain is Acetyl-coenzyme A carboxylase carboxyl transferase subunit alpha from Brucella anthropi (strain ATCC 49188 / DSM 6882 / CCUG 24695 / JCM 21032 / LMG 3331 / NBRC 15819 / NCTC 12168 / Alc 37) (Ochrobactrum anthropi).